The chain runs to 512 residues: MQLKASEVYEALKKQLEDFDELSELSEVGYVISIGDGIAKVYGLSNAYSGEILQFSTGTKGIVFSLKDNLIEAVVIGSDDQIKQGSQVKRTQTSLKVPTGKELLGRVVDAVGNPIDGKGEFINPTYLDVEVKAPSVMCRDSVNEPMYTGIKAIDALIPIGKGQRELIIGDRQTGKTAIAIDIILNQKRFHLSDQEREKVYCIYVAIGQKRSTVAQLVKKLQETGAMAYTTVVLSSASDAASLQYLAPYTGCAIGEYFRDNGMHALVIYDDLSKHAIAYRQISLLLRRPPAREAYPGDVFYLHSRLLERAAKLNKAKGEGSLTALPIVETQNSDVSAYIPTNIISITDGQIFLESELFYKGTKPALNVGISVSRVGAAAQIKAMKDIAGTVKLELAQYHEMEAFSQFGADLDSSSMQLINRGRRLSELLKQSQYCPFSVEEQIIVLFAGINGYLDKVAVSKVKEFESNMLEHFRIHNPDIMNEIISTKKITEIISSKLHQILQEFVKSIEQYS.

Position 169–176 (169–176 (GDRQTGKT)) interacts with ATP.

Belongs to the ATPase alpha/beta chains family. In terms of assembly, F-type ATPases have 2 components, CF(1) - the catalytic core - and CF(0) - the membrane proton channel. CF(1) has five subunits: alpha(3), beta(3), gamma(1), delta(1), epsilon(1). CF(0) has three main subunits: a(1), b(2) and c(9-12). The alpha and beta chains form an alternating ring which encloses part of the gamma chain. CF(1) is attached to CF(0) by a central stalk formed by the gamma and epsilon chains, while a peripheral stalk is formed by the delta and b chains.

The protein resides in the cell inner membrane. The enzyme catalyses ATP + H2O + 4 H(+)(in) = ADP + phosphate + 5 H(+)(out). Functionally, produces ATP from ADP in the presence of a proton gradient across the membrane. The alpha chain is a regulatory subunit. This chain is ATP synthase subunit alpha, found in Orientia tsutsugamushi (strain Ikeda) (Rickettsia tsutsugamushi).